Consider the following 214-residue polypeptide: Adenylate kinase (214 aa).

10 to 15 (GAGKGT) is a binding site for ATP. Residues 30-59 (STGDMLRAAVKAGTPLGLEAKKVMDAGQLV) form an NMP region. AMP contacts are provided by residues Thr31, Arg36, 57-59 (QLV), 85-88 (GFPR), and Gln92. Residues 122 to 159 (GRRVHPGSGRVYHVVFNPPKVEGKDDVTGEDLAIRPDD) form an LID region. Residues Arg123 and 132-133 (VY) each bind ATP. Arg156 and Arg167 together coordinate AMP. Gln200 provides a ligand contact to ATP.

The protein belongs to the adenylate kinase family. As to quaternary structure, monomer.

The protein localises to the cytoplasm. It catalyses the reaction AMP + ATP = 2 ADP. The protein operates within purine metabolism; AMP biosynthesis via salvage pathway; AMP from ADP: step 1/1. Its function is as follows. Catalyzes the reversible transfer of the terminal phosphate group between ATP and AMP. Plays an important role in cellular energy homeostasis and in adenine nucleotide metabolism. The sequence is that of Adenylate kinase from Shewanella sp. (strain ANA-3).